Consider the following 128-residue polypeptide: Large ribosomal subunit protein bL20 (128 aa).

This sequence belongs to the bacterial ribosomal protein bL20 family.

Its function is as follows. Binds directly to 23S ribosomal RNA and is necessary for the in vitro assembly process of the 50S ribosomal subunit. It is not involved in the protein synthesizing functions of that subunit. The polypeptide is Large ribosomal subunit protein bL20 (Anaplasma phagocytophilum (strain HZ)).